We begin with the raw amino-acid sequence, 452 residues long: Imaginal disk growth factor 6 (452 aa).

Residues 1–18 form the signal peptide; sequence MIIKALAIVSLCLASIQA. The GH18 domain maps to 29–452; that stretch reads KHLVCYYDSA…LRAIKYRLTN (424 aa). A disulfide bridge links Cys-33 with Cys-60. A glycan (N-linked (GlcNAc...) asparagine) is linked at Asn-233. Cys-352 and Cys-435 are disulfide-bonded.

The protein belongs to the glycosyl hydrolase 18 family. IDGF subfamily. Post-translationally, glycosylated. In terms of tissue distribution, in larvae, it is expressed in the fat body and by hemocytes.

It localises to the secreted. In terms of biological role, probably required to stimulate the proliferation, polarization and motility of imaginal disk cells. May act by stabilizing the binding of insulin-like peptides to its receptor through a simultaneous interaction with both molecules to form a multiprotein signaling complex. The sequence is that of Imaginal disk growth factor 6 from Drosophila melanogaster (Fruit fly).